Here is a 310-residue protein sequence, read N- to C-terminus: Acetyl-coenzyme A carboxylase carboxyl transferase subunit alpha (310 aa).

Residues 31–285 (SFERELRIIN…KQKILRRLKQ (255 aa)) enclose the CoA carboxyltransferase C-terminal domain.

This sequence belongs to the AccA family. As to quaternary structure, acetyl-CoA carboxylase is a heterohexamer composed of biotin carboxyl carrier protein (accB), biotin carboxylase (accC) and two subunits each of ACCase subunit alpha (accA) and ACCase subunit beta (accD).

Its subcellular location is the plastid. It localises to the chloroplast. It catalyses the reaction N(6)-carboxybiotinyl-L-lysyl-[protein] + acetyl-CoA = N(6)-biotinyl-L-lysyl-[protein] + malonyl-CoA. The protein operates within lipid metabolism; malonyl-CoA biosynthesis; malonyl-CoA from acetyl-CoA: step 1/1. Functionally, component of the acetyl coenzyme A carboxylase (ACC) complex. First, biotin carboxylase catalyzes the carboxylation of biotin on its carrier protein (BCCP) and then the CO(2) group is transferred by the carboxyltransferase to acetyl-CoA to form malonyl-CoA. This is Acetyl-coenzyme A carboxylase carboxyl transferase subunit alpha from Cyanidioschyzon merolae (strain NIES-3377 / 10D) (Unicellular red alga).